We begin with the raw amino-acid sequence, 539 residues long: uncharacterized protein (539 aa).

S216 serves as the catalytic Acyl-ester intermediate.

The protein belongs to the type-B carboxylesterase/lipase family.

The protein localises to the cytoplasm. It is found in the nucleus. This is an uncharacterized protein from Schizosaccharomyces pombe (strain 972 / ATCC 24843) (Fission yeast).